Consider the following 292-residue polypeptide: Xyloglucan endotransglucosylase/hydrolase protein 2 (292 aa).

Residues Met1–Ala24 form the signal peptide. The GH16 domain occupies Arg25–Tyr219. Glu106 serves as the catalytic Nucleophile. Glu110 acts as the Proton donor in catalysis. Xyloglucan is bound by residues Glu110, Gln123 to Asn125, Gly133 to Glu135, Asn198 to Trp199, and Gly203. 2 disulfide bridges follow: Cys227–Cys239 and Cys275–Cys288. Arg280 provides a ligand contact to xyloglucan.

The protein belongs to the glycosyl hydrolase 16 family. XTH group 1 subfamily. Post-translationally, contains at least one intrachain disulfide bond essential for its enzymatic activity.

Its subcellular location is the secreted. The protein resides in the cell wall. The protein localises to the extracellular space. It is found in the apoplast. It carries out the reaction breaks a beta-(1-&gt;4) bond in the backbone of a xyloglucan and transfers the xyloglucanyl segment on to O-4 of the non-reducing terminal glucose residue of an acceptor, which can be a xyloglucan or an oligosaccharide of xyloglucan.. Functionally, may catalyze xyloglucan endohydrolysis (XEH) and/or endotransglycosylation (XET). Cleaves and religates xyloglucan polymers, an essential constituent of the primary cell wall, and thereby participates in cell wall construction of growing tissues. The sequence is that of Xyloglucan endotransglucosylase/hydrolase protein 2 (XTH2) from Arabidopsis thaliana (Mouse-ear cress).